The following is a 53-amino-acid chain: ASDGRNAVVHERAPELVVTATTTCCGYDPMTICPPCMCTHSCPPKRKPGRRND.

A propeptide spanning residues 1–12 (ASDGRNAVVHER) is cleaved from the precursor. Proline 14 carries the 4-hydroxyproline modification. At glutamate 15 the chain carries 4-carboxyglutamate. O-linked (HexNAc...) threonine glycans are attached at residues threonine 19 and threonine 21. 4-hydroxyproline occurs at positions 29, 34, 35, 43, 44, and 48. Proline 48 carries the proline amide modification. The propeptide occupies 49–53 (GRRND).

The protein belongs to the conotoxin A superfamily. Post-translationally, contains 3 disulfide bonds. Expressed by the venom duct.

It is found in the secreted. Its function is as follows. Probable neurotoxin with ion channel inhibitor activity. The polypeptide is Conotoxin Bu27 (Conus bullatus (Bubble cone)).